Consider the following 289-residue polypeptide: Pseudouridine-5'-phosphate glycosidase (289 aa).

E10 functions as the Proton donor in the catalytic mechanism. The substrate site is built by K71 and V91. Position 121 (D121) interacts with Mn(2+). Residue 123-125 (SQD) participates in substrate binding. The Nucleophile role is filled by K142.

The protein belongs to the pseudouridine-5'-phosphate glycosidase family. In terms of assembly, homotrimer. Requires Mn(2+) as cofactor.

It catalyses the reaction D-ribose 5-phosphate + uracil = psi-UMP + H2O. Catalyzes the reversible cleavage of pseudouridine 5'-phosphate (PsiMP) to ribose 5-phosphate and uracil. Functions biologically in the cleavage direction, as part of a pseudouridine degradation pathway. This is Pseudouridine-5'-phosphate glycosidase from Kosmotoga olearia (strain ATCC BAA-1733 / DSM 21960 / TBF 19.5.1).